The chain runs to 162 residues: Large ribosomal subunit protein uL30 (162 aa).

Belongs to the universal ribosomal protein uL30 family. As to quaternary structure, part of the 50S ribosomal subunit.

This Staphylothermus marinus (strain ATCC 43588 / DSM 3639 / JCM 9404 / F1) protein is Large ribosomal subunit protein uL30.